The chain runs to 968 residues: MLTEASLSIWGWGSLGIVLFLITFGPFVIFYLTFYILCFVGGGLVVTLLFGKTNSEKYLEQCEHSFLPPTSPGVPKCLEEMKREARTIKIDRRLTGANIIDEPLQQVIQFSLRDYVQYWYYTLSDDESFLLEIRQTLQNALIQFATRSKEIDWQPYFTTRIVDDFGTHLRVFRKAQQKITEKDDQVKGTAEDLVDTFFEVEVEMEKEVCRDLVCTSPKDEEGFLRDLCEVLLYLLLPPGDFQNKIMRYFVREILARGILLPLINQLSDPDYINQYVIWMIRDSNCNYEAFMNIIKLSDNIGELEAVRDKAAEELQYLRSLDTAGDDINTIKNQINSLLFVKKVCDSRIQRLQSGKEINTVKLAANFGKLCTVPLDSILVDNVALQFFMDYMQQTGGQAHLFFWMTVEGYRVTAQQQLEVLLSRQRDGKHQTNQTKGLLRAAAVGIYEQYLSEKASPRVTVDDYLVAKLADTLNHEDPTPEIFDDIQRKVYELMLRDERFYPSFRQNALYVRMLAELDMLKDPSFRGSDDGDGESFNGSPTGSINLSLDDLSNVSSDDSVQLHAYISDTVYADYDPYAVAGVCNDHGKTYALYAITVHRRNLNSEEMWKTYRRYSDFHDFHMRITEQFESLSSILKLPGKKTFNNMDRDFLEKRKKDLNAYLQLLLAPEMMKASPALAHYVYDFLENKAYSKGKGDFARKMDTFVNPLRNSMRNVSNAVKSLPDSLAEGMTKMSDNMGKMSERLGQDIKQSFFKVPPLIPKTDSDPEHRRVSAQLDDNVDDNIPLRVMLLLMDEVFDLKERNQWLRRNIKNLLQQLIRATYGDTINRKIVDHVDWMTSPEQVADSVKRFRDAFWPNGILAEAVPCRDKSIRMRTRVAGKTKLLAIMPDELKHIIGAETTRKGILRVFEMFQHNQLNRRMVYVFLEGFLETLFPQYKFRELFNKLHSRSKQMQKYKQKLQTTQAPSLQKR.

The 188-residue stretch at 97–284 (ANIIDEPLQQ…YVIWMIRDSN (188 aa)) folds into the PXA domain. An RGS domain is found at 373–496 (PLDSILVDNV…RKVYELMLRD (124 aa)). Positions 570-691 (YADYDPYAVA…DFLENKAYSK (122 aa)) constitute a PX domain. A 1,2-diacyl-sn-glycero-3-phospho-(1D-myo-inositol-3-phosphate) contacts are provided by arginine 612, serine 614, lysine 639, and arginine 653.

The protein belongs to the sorting nexin family.

It localises to the early endosome membrane. Its function is as follows. May be involved in several stages of intracellular trafficking. May play a role in endosome homeostasis. Acts as a GAP for Galphas. This is Sorting nexin-13 (SNX13) from Homo sapiens (Human).